A 211-amino-acid chain; its full sequence is Thymidylate kinase (211 aa).

10-17 contacts ATP; the sequence is GVEGCGKT.

This sequence belongs to the thymidylate kinase family.

It carries out the reaction dTMP + ATP = dTDP + ADP. Its function is as follows. Phosphorylation of dTMP to form dTDP in both de novo and salvage pathways of dTTP synthesis. In Nostoc sp. (strain PCC 7120 / SAG 25.82 / UTEX 2576), this protein is Thymidylate kinase.